A 368-amino-acid polypeptide reads, in one-letter code: GTPase Obg (368 aa).

The 161-residue stretch at 1-161 (MRFVDEATIT…RSLRLELKIL (161 aa)) folds into the Obg domain. In terms of domain architecture, OBG-type G spans 162-337 (ADAGLLGLPN…VVAEMWRMRD (176 aa)). GTP contacts are provided by residues 168 to 175 (GLPNAGKS), 193 to 197 (FTTLI), 217 to 220 (DIPG), 290 to 293 (NKID), and 318 to 320 (SAL). Mg(2+)-binding residues include Ser-175 and Thr-195.

This sequence belongs to the TRAFAC class OBG-HflX-like GTPase superfamily. OBG GTPase family. As to quaternary structure, monomer. It depends on Mg(2+) as a cofactor.

The protein resides in the cytoplasm. An essential GTPase which binds GTP, GDP and possibly (p)ppGpp with moderate affinity, with high nucleotide exchange rates and a fairly low GTP hydrolysis rate. Plays a role in control of the cell cycle, stress response, ribosome biogenesis and in those bacteria that undergo differentiation, in morphogenesis control. This chain is GTPase Obg, found in Nitratidesulfovibrio vulgaris (strain DSM 19637 / Miyazaki F) (Desulfovibrio vulgaris).